The sequence spans 304 residues: Ribonuclease Z (304 aa).

The Zn(2+) site is built by His63, His65, Asp67, His68, His143, Asp213, and His271. The active-site Proton acceptor is Asp67.

This sequence belongs to the RNase Z family. Homodimer. Zn(2+) is required as a cofactor.

The enzyme catalyses Endonucleolytic cleavage of RNA, removing extra 3' nucleotides from tRNA precursor, generating 3' termini of tRNAs. A 3'-hydroxy group is left at the tRNA terminus and a 5'-phosphoryl group is left at the trailer molecule.. Functionally, zinc phosphodiesterase, which displays some tRNA 3'-processing endonuclease activity. Probably involved in tRNA maturation, by removing a 3'-trailer from precursor tRNA. The protein is Ribonuclease Z of Parabacteroides distasonis (strain ATCC 8503 / DSM 20701 / CIP 104284 / JCM 5825 / NCTC 11152).